A 456-amino-acid chain; its full sequence is Nitrogenase molybdenum-iron protein beta chain (456 aa).

[8Fe-7S] cluster-binding residues include Cys-23, Cys-48, Cys-106, and Ser-141.

The protein belongs to the NifD/NifK/NifE/NifN family. As to quaternary structure, tetramer of two alpha and two beta chains. Forms complex with the iron protein (nitrogenase component 2). The cofactor is [8Fe-7S] cluster.

It catalyses the reaction N2 + 8 reduced [2Fe-2S]-[ferredoxin] + 16 ATP + 16 H2O = H2 + 8 oxidized [2Fe-2S]-[ferredoxin] + 2 NH4(+) + 16 ADP + 16 phosphate + 6 H(+). This molybdenum-iron protein is part of the nitrogenase complex that catalyzes the key enzymatic reactions in nitrogen fixation. The polypeptide is Nitrogenase molybdenum-iron protein beta chain (nifK2) (Methanosarcina barkeri).